We begin with the raw amino-acid sequence, 138 residues long: Large ribosomal subunit protein uL14m (138 aa).

It belongs to the universal ribosomal protein uL14 family. In terms of assembly, component of the mitochondrial large ribosomal subunit (mt-LSU). Mature yeast 74S mitochondrial ribosomes consist of a small (37S) and a large (54S) subunit. The 37S small subunit contains a 15S ribosomal RNA (15S mt-rRNA) and 34 different proteins. The 54S large subunit contains a 21S rRNA (21S mt-rRNA) and 46 different proteins.

It is found in the mitochondrion. Its function is as follows. Component of the mitochondrial ribosome (mitoribosome), a dedicated translation machinery responsible for the synthesis of mitochondrial genome-encoded proteins, including at least some of the essential transmembrane subunits of the mitochondrial respiratory chain. The mitoribosomes are attached to the mitochondrial inner membrane and translation products are cotranslationally integrated into the membrane. The sequence is that of Large ribosomal subunit protein uL14m (MRPL38) from Saccharomyces cerevisiae (strain ATCC 204508 / S288c) (Baker's yeast).